The chain runs to 205 residues: High frequency lysogenization protein HflD homolog (205 aa).

This sequence belongs to the HflD family.

The protein resides in the cytoplasm. Its subcellular location is the cell inner membrane. The sequence is that of High frequency lysogenization protein HflD homolog from Shewanella sp. (strain W3-18-1).